Reading from the N-terminus, the 106-residue chain is CRISPR-associated endoribonuclease Cas2 (106 aa).

Aspartate 8 serves as a coordination point for Mg(2+). Residues 86–106 (EEAAEAAVSYPGRSRKKARAG) form a disordered region.

The protein belongs to the CRISPR-associated endoribonuclease Cas2 protein family. Homodimer, forms a heterotetramer with a Cas1 homodimer. Requires Mg(2+) as cofactor.

Functionally, CRISPR (clustered regularly interspaced short palindromic repeat), is an adaptive immune system that provides protection against mobile genetic elements (viruses, transposable elements and conjugative plasmids). CRISPR clusters contain sequences complementary to antecedent mobile elements and target invading nucleic acids. CRISPR clusters are transcribed and processed into CRISPR RNA (crRNA). Functions as a ssRNA-specific endoribonuclease. Involved in the integration of spacer DNA into the CRISPR cassette. The chain is CRISPR-associated endoribonuclease Cas2 from Desulforudis audaxviator (strain MP104C).